The sequence spans 1157 residues: Myosin tail region-interacting protein MTI1 (1157 aa).

Residues 5–69 enclose the SH3 domain; sequence EVPFKVVAQF…PKSFVAVQGS (65 aa). Disordered stretches follow at residues 68–116 and 135–156; these read GSEV…GPVP and TAVS…KVPM. Polar residues predominate over residues 77 to 89; sequence SSPNTGSTEQRTI. Residues 93 to 110 show a composition bias toward basic and acidic residues; it reads VEQKDLPEPISPETKKET. Ser-103 carries the phosphoserine modification. Over residues 138–149 the composition is skewed to polar residues; sequence SAQVQHDSSSGN. 2 positions are modified to phosphoserine: Ser-158 and Ser-166. 2 disordered regions span residues 231 to 256 and 284 to 888; these read PEPI…KDLP and KKAK…PKVA. Coiled coils occupy residues 234–301 and 356–430; these read INRA…NKNE and EKEQ…GASR. 3 stretches are compositionally biased toward basic and acidic residues: residues 242 to 256, 284 to 296, and 312 to 383; these read GRIE…KDLP, KKAK…ERSA, and NEKT…RGEN. A compositionally biased stretch (acidic residues) spans 398 to 411; it reads EGDNDEEKEEEDSE. Basic and acidic residues-rich tracts occupy residues 412-423 and 506-524; these read ENRRAALRERMA and KTLD…EHGT. The segment covering 544-558 has biased composition (acidic residues); sequence DSDEDTDDHEFEDAN. A Phosphoserine modification is found at Ser-565. Residues 574–585 are compositionally biased toward low complexity; it reads GNNESENVNSGE. Over residues 597–606 the composition is skewed to basic and acidic residues; the sequence is RTAEVSHDIE. Residues 607 to 641 are compositionally biased toward polar residues; sequence NSSQNTTGNVLPVSSPQTRVARNGSINSLTKSISG. A phosphoserine mark is found at Ser-621, Ser-631, and Ser-634. The residue at position 636 (Thr-636) is a Phosphothreonine. Phosphoserine occurs at positions 638 and 647. The span at 642–653 shows a compositional bias: basic and acidic residues; that stretch reads ENRRKSINEYHD. Residues 654–668 show a composition bias toward polar residues; the sequence is TVSTNSSALTETAQD. Composition is skewed to pro residues over residues 691-738 and 747-765; these read PHPV…PVSS and SIPP…PAPL. Basic and acidic residues predominate over residues 769–778; it reads KHNEVEEHVK. The segment covering 795–808 has biased composition (pro residues); sequence NTAPPLPRAPPVPP. A compositionally biased stretch (polar residues) spans 832-853; that stretch reads QNVTASTPSMMSTQQRVPTSVL. The residue at position 850 (Thr-850) is a Phosphothreonine. Ser-889 bears the Phosphoserine mark. 2 positions are modified to phosphothreonine: Thr-894 and Thr-895. Lys-1012 participates in a covalent cross-link: Glycyl lysine isopeptide (Lys-Gly) (interchain with G-Cter in ubiquitin).

As to quaternary structure, binds to the SH3 domains of the type I myosins MYO3 and MYO5.

It is found in the cytoplasm. It localises to the cytoskeleton. Its subcellular location is the actin patch. Involved in the regulation of actin cytoskeleton. The sequence is that of Myosin tail region-interacting protein MTI1 (BBC1) from Saccharomyces cerevisiae (strain ATCC 204508 / S288c) (Baker's yeast).